Consider the following 145-residue polypeptide: uncharacterized protein (145 aa).

The chain crosses the membrane as a helical span at residues 63-83; the sequence is FLCLPLFLSFLVANLILWLSF.

It is found in the mitochondrion membrane. This is an uncharacterized protein from Arabidopsis thaliana (Mouse-ear cress).